The chain runs to 201 residues: Peptide deformylase (201 aa).

Fe cation contacts are provided by Cys-121 and His-163. The active site involves Glu-164. His-167 contributes to the Fe cation binding site.

Belongs to the polypeptide deformylase family. The cofactor is Fe(2+).

The enzyme catalyses N-terminal N-formyl-L-methionyl-[peptide] + H2O = N-terminal L-methionyl-[peptide] + formate. Removes the formyl group from the N-terminal Met of newly synthesized proteins. Requires at least a dipeptide for an efficient rate of reaction. N-terminal L-methionine is a prerequisite for activity but the enzyme has broad specificity at other positions. In Synechococcus sp. (strain CC9902), this protein is Peptide deformylase.